Here is a 239-residue protein sequence, read N- to C-terminus: Type III effector protein HopBA1 (239 aa).

Over residues 1-20 the composition is skewed to low complexity; sequence MLNRISSSSPTSYVSSGSSS. A disordered region spans residues 1-31; sequence MLNRISSSSPTSYVSSGSSSAGINPSINVRP.

The protein localises to the secreted. It is found in the host cell. Virulence factor recognized by the A.thaliana disease resistance protein RBA1, which triggers plant cell death. HopBA1 enhances RBA1 self-association, which is necessary for ectopic autoactivation of host cell death. The sequence is that of Type III effector protein HopBA1 from Pseudomonas syringae pv. aptata.